Consider the following 156-residue polypeptide: Transcription elongation factor GreA (156 aa).

Residues 8 to 75 are a coiled coil; sequence LTKEGYEKLK…ELENMLSKAE (68 aa).

It belongs to the GreA/GreB family.

Necessary for efficient RNA polymerase transcription elongation past template-encoded arresting sites. The arresting sites in DNA have the property of trapping a certain fraction of elongating RNA polymerases that pass through, resulting in locked ternary complexes. Cleavage of the nascent transcript by cleavage factors such as GreA or GreB allows the resumption of elongation from the new 3'terminus. GreA releases sequences of 2 to 3 nucleotides. The polypeptide is Transcription elongation factor GreA (Thermosipho melanesiensis (strain DSM 12029 / CIP 104789 / BI429)).